Here is a 224-residue protein sequence, read N- to C-terminus: UPF0758 protein Pfl01_5539 (224 aa).

The 123-residue stretch at 102-224 (ALENPQVVRD…PLSMAECGWM (123 aa)) folds into the MPN domain. The Zn(2+) site is built by His-173, His-175, and Asp-186. The JAMM motif motif lies at 173–186 (HNHPSGNSDPSQAD).

The protein belongs to the UPF0758 family.

The chain is UPF0758 protein Pfl01_5539 from Pseudomonas fluorescens (strain Pf0-1).